The primary structure comprises 490 residues: Protein twist (490 aa).

Disordered regions lie at residues 48-74 (QLQH…QHTQ), 98-167 (PSNE…TGGS), and 330-359 (LDGS…ETDE). Residues 54–64 (QHLHSHQHHQQ) are compositionally biased toward basic residues. 2 stretches are compositionally biased toward low complexity: residues 65–74 (HQQQQQQHTQ) and 104–135 (STSS…NNPS). Over residues 339-351 (AFRKPRRRLKRKP) the composition is skewed to basic residues. Residues 362-413 (NQRVMANVRERQRTQSLNDAFKSLQQIIPTLPSDKLSKIQTLKLATRYIDFL) enclose the bHLH domain.

As to quaternary structure, efficient DNA binding requires dimerization with another bHLH protein. Homodimer.

Its subcellular location is the nucleus. In terms of biological role, involved in the establishment and dorsoventral patterning of germ layers in the embryo. The polypeptide is Protein twist (Drosophila erecta (Fruit fly)).